The following is a 502-amino-acid chain: Lysine--tRNA ligase (502 aa).

Mg(2+)-binding residues include Glu-398 and Glu-405.

It belongs to the class-II aminoacyl-tRNA synthetase family. Homodimer. Requires Mg(2+) as cofactor.

Its subcellular location is the cytoplasm. The enzyme catalyses tRNA(Lys) + L-lysine + ATP = L-lysyl-tRNA(Lys) + AMP + diphosphate. The chain is Lysine--tRNA ligase from Thermotoga sp. (strain RQ2).